Consider the following 122-residue polypeptide: Large ribosomal subunit protein uL22 (122 aa).

The interval 102–122 (VAEGKEMKSSKSHKKNQAEGK) is disordered.

Belongs to the universal ribosomal protein uL22 family. As to quaternary structure, part of the 50S ribosomal subunit.

In terms of biological role, this protein binds specifically to 23S rRNA; its binding is stimulated by other ribosomal proteins, e.g. L4, L17, and L20. It is important during the early stages of 50S assembly. It makes multiple contacts with different domains of the 23S rRNA in the assembled 50S subunit and ribosome. Functionally, the globular domain of the protein is located near the polypeptide exit tunnel on the outside of the subunit, while an extended beta-hairpin is found that lines the wall of the exit tunnel in the center of the 70S ribosome. The polypeptide is Large ribosomal subunit protein uL22 (Helicobacter pylori (strain G27)).